The sequence spans 100 residues: Apolipoprotein C-II (100 aa).

Positions 1 to 22 are cleaved as a signal peptide; that stretch reads MDSRFLLALFLVLLVLGCEVQA. A lipid binding region spans residues 66–74; sequence SVDEKLRDM. The segment at 78–100 is lipoprotein lipase cofactor; the sequence is SSAAMTTYAIIFTDQILTLLKGE.

Belongs to the apolipoprotein C2 family. Post-translationally, proapolipoprotein C-II is synthesized as a sialic acid containing glycoprotein which is subsequently desialylated prior to its proteolytic processing. Proapolipoprotein C-II, the major form found in plasma undergoes proteolytic cleavage of its N-terminal hexapeptide to generate the mature form apolipoprotein C-II, which occurs as the minor form in plasma.

The protein localises to the secreted. In terms of biological role, component of chylomicrons, very low-density lipoproteins (VLDL), low-density lipoproteins (LDL), and high-density lipoproteins (HDL) in plasma. Plays an important role in lipoprotein metabolism as an activator of lipoprotein lipase. The protein is Apolipoprotein C-II (APOC2) of Myodes glareolus (Bank vole).